The chain runs to 211 residues: SOSS complex subunit B1 (211 aa).

A DNA-binding region (OB) is located at residues 22 to 92 (IVLETGRVTK…TLYTGRGGDL (71 aa)). A disordered region spans residues 110 to 211 (EPNPEYSAQQ…GKETRRSSKR (102 aa)). The segment covering 115–128 (YSAQQAPNKTVQND) has biased composition (polar residues). 2 stretches are compositionally biased toward pro residues: residues 133 to 143 (APQPPTGPPAT) and 165 to 174 (PHPPHTPSHP).

This sequence belongs to the SOSS-B family. SOSS-B1 subfamily. In terms of assembly, component of the SOSS complex, composed of SOSS-B (SOSS-B1/NABP2 or SOSS-B2/NABP1), SOSS-A/INTS3 and SOSS-C/INIP. SOSS complexes containing SOSS-B1/NABP2 are more abundant than complexes containing SOSS-B2/NABP1. Directly interacts with ATM, SOSS-A/INTS3 and RAD51. Interacts with INTS7. Phosphorylated by ATM in response to DNA damage. Phosphorylation prevents degradation by the proteasome, hence stabilization of the protein and accumulation within cells. Post-translationally, ubiquitinated in a FBXL5-dependent manner, leading to proteasomal degradation.

The protein localises to the nucleus. Component of the SOSS complex, a multiprotein complex that functions downstream of the MRN complex to promote DNA repair and G2/M checkpoint. In the SOSS complex, acts as a sensor of single-stranded DNA that binds to single-stranded DNA, in particular to polypyrimidines. The SOSS complex associates with DNA lesions and influences diverse endpoints in the cellular DNA damage response including cell-cycle checkpoint activation, recombinational repair and maintenance of genomic stability. Required for efficient homologous recombination-dependent repair of double-strand breaks (DSBs) and ATM-dependent signaling pathways. The polypeptide is SOSS complex subunit B1 (NABP2) (Bos taurus (Bovine)).